A 221-amino-acid polypeptide reads, in one-letter code: Fanconi anemia core complex-associated protein 24 (221 aa).

Belongs to the multisubunit FA complex composed of FANCA, FANCB, FANCC, FANCE, FANCF, FANCG, FANCL/PHF9, FANCM and FAAP24. Interacts with FANCM.

Its subcellular location is the nucleus. Plays a role in DNA repair through recruitment of the FA core complex to damaged DNA. Regulates FANCD2 monoubiquitination upon DNA damage. Induces chromosomal instability as well as hypersensitivity to DNA cross-linking agents, when repressed. Targets FANCM/FAAP24 complex to the DNA, preferentially to single strand DNA. The protein is Fanconi anemia core complex-associated protein 24 of Mus musculus (Mouse).